The chain runs to 650 residues: uncharacterized protein (650 aa).

This is an uncharacterized protein from Caenorhabditis elegans.